Consider the following 736-residue polypeptide: DEAD-box ATP-dependent RNA helicase 21 (736 aa).

Residues 14 to 38 adopt a coiled-coil conformation; the sequence is LTREEREKLALERRQAAVTDQRRSA. The span at 25–38 shows a compositional bias: basic and acidic residues; it reads ERRQAAVTDQRRSA. 2 disordered regions span residues 25-178 and 231-263; these read ERRQ…PKKR and KVAAAHEKETRAEQRRKAGLDDRPEDDAVDKKE. Pro residues predominate over residues 46 to 58; sequence PRPPPPPPPPLSN. Basic and acidic residues-rich tracts occupy residues 64 to 166 and 231 to 252; these read SSSH…DAIK and KVAAAHEKETRAEQRRKAGLDD. Positions 137–167 form a coiled coil; the sequence is DRDRERGDREKDRLEKMAEREREKELDAIKE. The Q motif motif lies at 315 to 343; that stretch reads RKWSESKLGTELLRAVEKAGYKEPSPIQM. The 196-residue stretch at 346–541 folds into the Helicase ATP-binding domain; it reads IPLGLQQRDV…RKYLRNPVVV (196 aa). 359 to 366 is an ATP binding site; sequence AETGSGKT. Positions 472 to 475 match the DEAD box motif; it reads DEAD. Residues 568–712 enclose the Helicase C-terminal domain; that stretch reads RLQKILTDLG…PVPPELARHE (145 aa). Residues 704 to 736 form a disordered region; sequence VPPELARHEASKFKPGSVPDRPPRRNDTVYATH.

The protein belongs to the DEAD box helicase family. DDX23/PRP28 subfamily.

It is found in the cytoplasm. The protein resides in the nucleus. The catalysed reaction is ATP + H2O = ADP + phosphate + H(+). ATP-dependent RNA helicase involved in mRNA splicing. May destabilize the U1/5'-splice site duplex to permit an effective competition for the 5'-splice site by the U6 snRNA, resulting in the switch between U1 and U6 at the 5'-splice site. May also act to unwind the U4/U6 base-pairing interaction in the U4/U6/U5 snRNP, facilitating the first covalent step of splicing. This Oryza sativa subsp. japonica (Rice) protein is DEAD-box ATP-dependent RNA helicase 21.